Reading from the N-terminus, the 882-residue chain is DNA polymerase 1 (882 aa).

Residues 1–31 (MTKQLTLFDIPSSKPAKSEQNTQQSQQSAPV) are disordered. Residues 18–29 (SEQNTQQSQQSA) show a composition bias toward polar residues.

This sequence belongs to the DNA polymerase type-B family. As to quaternary structure, interacts with PCNA subunit PCNA2 and weakly with PCNA3.

The enzyme catalyses DNA(n) + a 2'-deoxyribonucleoside 5'-triphosphate = DNA(n+1) + diphosphate. With respect to regulation, DNA synthesis is stimulated by PCNA heterotrimers. This polymerase possesses two enzymatic activities: DNA synthesis (polymerase) and an exonucleolytic activity that degrades single-stranded DNA in the 3'- to 5'-direction. DNA polymerase I, DNA ligase and the flap endonuclease may be constitutively associated with the PCNA heterotrimer forming a scanning complex able to couple DNA synthesis and Okazaki fragment maturation. This Saccharolobus solfataricus (strain ATCC 35092 / DSM 1617 / JCM 11322 / P2) (Sulfolobus solfataricus) protein is DNA polymerase 1 (dpo1).